A 298-amino-acid chain; its full sequence is Syntaxin-4 (298 aa).

At 1-274 the chain is on the cytoplasmic side; it reads MRDRTHELRQ…NQKKARKKKV (274 aa). Residues serine 15, serine 29, serine 35, serine 36, serine 117, serine 208, and serine 248 each carry the phosphoserine modification. The stretch at 38–163 forms a coiled coil; the sequence is DDEFFQKVQT…ERIRRQLKIT (126 aa). An interaction with CENPF region spans residues 154 to 298; sequence ERIRRQLKIT…VIIGITITVG (145 aa). A t-SNARE coiled-coil homology domain is found at 200–262; sequence LNEISARHSE…ERGQEHVKIA (63 aa). A helical; Anchor for type IV membrane protein transmembrane segment spans residues 275-295; the sequence is MIAICVSVTVLILAVIIGITI. Residues 296–298 lie on the Extracellular side of the membrane; that stretch reads TVG.

It belongs to the syntaxin family. As to quaternary structure, found in a complex with VAMP8 and SNAP23. Detected in a complex with SNAP23 and STXBP4. Interacts with SNAP23 and SNAPIN. Interacts with VAMP2. Interacts with LLGL1. Interacts (via C-terminus) with CENPF. Interacts with DOC2B. Interacts with STXBP3; excludes interaction with DOC2B and SNAP25. Interacts with STXBP4; excludes interaction with VAMP2. Component of the SNARE complex composed of STX4, SNAP23 and VAMP7 that interacts with SYT7 during lysosomal exocytosis. Interacts with STXBP6. Interacts with STXBP5L. Expressed in all tissues tested including adipose, brain, testis, intestine, liver, heart, spleen, skeletal muscle and kidney.

The protein resides in the cell membrane. The protein localises to the cell projection. It localises to the neuron projection. Its subcellular location is the stereocilium. In terms of biological role, plasma membrane t-SNARE that mediates docking of transport vesicles. Necessary for the translocation of SLC2A4 from intracellular vesicles to the plasma membrane. In neurons, recruited at neurite tips to membrane domains rich in the phospholipid 1-oleoyl-2-palmitoyl-PC (OPPC) which promotes neurite tip surface expression of the dopamine transporter SLC6A3/DAT by facilitating fusion of SLC6A3-containing transport vesicles with the plasma membrane. Together with STXB3 and VAMP2, may also play a role in docking/fusion of intracellular GLUT4-containing vesicles with the cell surface in adipocytes and in docking of synaptic vesicles at presynaptic active zones. Required for normal hearing. This Rattus norvegicus (Rat) protein is Syntaxin-4 (Stx4).